The chain runs to 183 residues: Ribosome rescue factor SmrB (183 aa).

A Smr domain is found at 98–173 (LDLHGLTQLQ…GDAALLVLIE (76 aa)).

The protein belongs to the SmrB family. As to quaternary structure, associates with collided ribosomes, but not with correctly translating polysomes.

Its function is as follows. Acts as a ribosome collision sensor. Detects stalled/collided disomes (pairs of ribosomes where the leading ribosome is stalled and a second ribosome has collided with it) and endonucleolytically cleaves mRNA at the 5' boundary of the stalled ribosome. Stalled/collided disomes form a new interface (primarily via the 30S subunits) that binds SmrB. Cleaved mRNA becomes available for tmRNA ligation, leading to ribosomal subunit dissociation and rescue of stalled ribosomes. The sequence is that of Ribosome rescue factor SmrB from Salmonella paratyphi A (strain ATCC 9150 / SARB42).